We begin with the raw amino-acid sequence, 258 residues long: Phosphate import ATP-binding protein PstB (258 aa).

One can recognise an ABC transporter domain in the interval 5–247; it reads LDLKGVNIYY…EKIFSNPSQK (243 aa). Residue 37–44 participates in ATP binding; that stretch reads GPSGCGKT.

The protein belongs to the ABC transporter superfamily. Phosphate importer (TC 3.A.1.7) family. As to quaternary structure, the complex is composed of two ATP-binding proteins (PstB), two transmembrane proteins (PstC and PstA) and a solute-binding protein (PstS).

It is found in the cell membrane. It carries out the reaction phosphate(out) + ATP + H2O = ADP + 2 phosphate(in) + H(+). Its function is as follows. Part of the ABC transporter complex PstSACB involved in phosphate import. Responsible for energy coupling to the transport system. The chain is Phosphate import ATP-binding protein PstB from Mycolicibacterium paratuberculosis (strain ATCC BAA-968 / K-10) (Mycobacterium paratuberculosis).